The sequence spans 57 residues: uncharacterized protein (57 aa).

This is an uncharacterized protein from Methanocaldococcus jannaschii (strain ATCC 43067 / DSM 2661 / JAL-1 / JCM 10045 / NBRC 100440) (Methanococcus jannaschii).